The following is a 472-amino-acid chain: Probable dipeptidase A (472 aa).

Cys10 is an active-site residue.

This sequence belongs to the peptidase C69 family.

The enzyme catalyses an L-aminoacyl-L-amino acid + H2O = 2 an L-alpha-amino acid. The chain is Probable dipeptidase A (pepDA) from Streptococcus pyogenes serotype M18 (strain MGAS8232).